Reading from the N-terminus, the 172-residue chain is Photosystem I assembly protein Ycf3 (172 aa).

3 TPR repeats span residues 35 to 70, 74 to 107, and 122 to 155; these read AFTY…EIDP, SYIL…NPFL, and GEQA…TPGN.

This sequence belongs to the Ycf3 family.

The protein resides in the plastid. It is found in the chloroplast thylakoid membrane. Essential for the assembly of the photosystem I (PSI) complex. May act as a chaperone-like factor to guide the assembly of the PSI subunits. In Sorghum bicolor (Sorghum), this protein is Photosystem I assembly protein Ycf3.